A 324-amino-acid polypeptide reads, in one-letter code: Ribose-phosphate pyrophosphokinase (324 aa).

Residues 45–47 (NGE) and 104–105 (RQ) each bind ATP. 2 residues coordinate Mg(2+): H138 and D178. K201 is a catalytic residue. D-ribose 5-phosphate-binding positions include R203, D229, and 233-237 (DTGGT).

This sequence belongs to the ribose-phosphate pyrophosphokinase family. Class I subfamily. Homohexamer. Requires Mg(2+) as cofactor.

It localises to the cytoplasm. The catalysed reaction is D-ribose 5-phosphate + ATP = 5-phospho-alpha-D-ribose 1-diphosphate + AMP + H(+). It functions in the pathway metabolic intermediate biosynthesis; 5-phospho-alpha-D-ribose 1-diphosphate biosynthesis; 5-phospho-alpha-D-ribose 1-diphosphate from D-ribose 5-phosphate (route I): step 1/1. In terms of biological role, involved in the biosynthesis of the central metabolite phospho-alpha-D-ribosyl-1-pyrophosphate (PRPP) via the transfer of pyrophosphoryl group from ATP to 1-hydroxyl of ribose-5-phosphate (Rib-5-P). This Streptomyces coelicolor (strain ATCC BAA-471 / A3(2) / M145) protein is Ribose-phosphate pyrophosphokinase.